The sequence spans 261 residues: Single-strand annealing weakened protein 1 (261 aa).

In terms of assembly, interacts with MSH2, MSH3, RAD1, RAD10, RAD51 and RAD52.

It localises to the nucleus. In terms of biological role, catalyzes 3'-non-homologous tail removal of RAD1/RAD10-dependent single-strand annealing recombination intermediates. Plays a key role in targeting RAD1/RAD10 complex to 3'-flap cleavage substrate in recombination. Also contributes to the integrity of ribosomal DNA arrays. This Saccharomyces cerevisiae (strain ATCC 204508 / S288c) (Baker's yeast) protein is Single-strand annealing weakened protein 1 (SAW1).